A 184-amino-acid polypeptide reads, in one-letter code: MARYGATSTNPAKSASARGSYLRVSFKNTRETAQAINGWELTKAQKYLEQVLDHQRAIPFRRFNSSIGRTAQGKEFGVTKARWPAKSVKFVQGLLQNAAANAEAKGLDATKLYVSHIQVNQAPKQRRRTYRAHGRINKYESSPSHIELVVTEKEEAVAKAAEKKVVRLTSRQRGRIAAQKRIAA.

Lys46 is covalently cross-linked (Glycyl lysine isopeptide (Lys-Gly) (interchain with G-Cter in ubiquitin)). Residue Thr70 is modified to Phosphothreonine.

Belongs to the universal ribosomal protein uL22 family. In terms of assembly, component of the large ribosomal subunit (LSU). Mature yeast ribosomes consist of a small (40S) and a large (60S) subunit. The 40S small subunit contains 1 molecule of ribosomal RNA (18S rRNA) and 33 different proteins (encoded by 57 genes). The large 60S subunit contains 3 rRNA molecules (25S, 5.8S and 5S rRNA) and 46 different proteins (encoded by 81 genes). uL22 is associated with the polypeptide exit tunnel.

Its subcellular location is the cytoplasm. In terms of biological role, component of the ribosome, a large ribonucleoprotein complex responsible for the synthesis of proteins in the cell. The small ribosomal subunit (SSU) binds messenger RNAs (mRNAs) and translates the encoded message by selecting cognate aminoacyl-transfer RNA (tRNA) molecules. The large subunit (LSU) contains the ribosomal catalytic site termed the peptidyl transferase center (PTC), which catalyzes the formation of peptide bonds, thereby polymerizing the amino acids delivered by tRNAs into a polypeptide chain. The nascent polypeptides leave the ribosome through a tunnel in the LSU and interact with protein factors that function in enzymatic processing, targeting, and the membrane insertion of nascent chains at the exit of the ribosomal tunnel. This is Large ribosomal subunit protein uL22A from Saccharomyces cerevisiae (strain ATCC 204508 / S288c) (Baker's yeast).